The chain runs to 227 residues: Peroxisomal membrane protein 11B (227 aa).

Residues 1–85 (MSLDTVDKLV…RNPGATPMIR (85 aa)) lie on the Cytoplasmic side of the membrane. A helical transmembrane segment spans residues 86–106 (FLAVLANSGEMVYFFFDHFLW). The Lumenal segment spans residues 107–201 (LSRIGSIDAK…IALAEIHPNP (95 aa)). Residues 202-222 (FCNHTITLGISGLVSAWAGWY) form a helical membrane-spanning segment. At 223–227 (RNWPS) the chain is on the cytoplasmic side.

It belongs to the peroxin-11 family. Homooligomer. Interacts with ARC5 and FIS1B on peroxisomes. As to expression, expressed in roots, leaves and developing siliques.

It localises to the peroxisome membrane. Functionally, involved in peroxisomal proliferation. Promotes peroxisomal duplication, aggregation or elongation without fission. The chain is Peroxisomal membrane protein 11B (PEX11B) from Arabidopsis thaliana (Mouse-ear cress).